The chain runs to 1047 residues: Probable alpha-mannosidase At5g66150 (1047 aa).

An N-terminal signal peptide occupies residues 1-27 (MEKPGMSLLKGSLCVIVFLLLLSLVES). Zn(2+) is bound by residues His56, Asp58, and Asp178. Asn280, Asn287, and Asn345 each carry an N-linked (GlcNAc...) asparagine glycan. Residue His419 coordinates Zn(2+). Intrachain disulfides connect Cys455–Cys465 and Cys476–Cys484. 8 N-linked (GlcNAc...) asparagine glycosylation sites follow: Asn480, Asn508, Asn541, Asn605, Asn606, Asn668, Asn780, and Asn857. Cys855 and Cys860 form a disulfide bridge.

The protein belongs to the glycosyl hydrolase 38 family. Homodimer. It depends on Zn(2+) as a cofactor.

It localises to the vacuole. It catalyses the reaction Hydrolysis of terminal, non-reducing alpha-D-mannose residues in alpha-D-mannosides.. Its function is as follows. Liberates mannose from p-nitrophenyl-alpha-D-mannoside in vitro. The sequence is that of Probable alpha-mannosidase At5g66150 from Arabidopsis thaliana (Mouse-ear cress).